Here is a 476-residue protein sequence, read N- to C-terminus: RuvB-like 1 (476 aa).

The disordered stretch occupies residues 1-23; it reads MDMEVDEAISGTSSSRLAPIEEV. ATP is bound at residue 89 to 96; that stretch reads GPPATGKT.

It belongs to the RuvB family. In terms of assembly, forms homohexameric rings. May form a dodecamer with ruvb-2 made of two stacked hexameric rings. In terms of tissue distribution, expressed in gonadal cells.

The protein localises to the cytoplasm. It is found in the nucleus. It catalyses the reaction ATP + H2O = ADP + phosphate + H(+). Its function is as follows. Possesses single-stranded DNA-stimulated ATPase and ATP dependent DNA helicase (3' to 5') activity suggesting a role in nuclear processes such as recombination and transcription. May participate in several chromatin remodeling complexes that mediate the ATP-dependent exchange of histones and remodel chromatin by shifting nucleosomes. Involvement in these complexes is likely required for transcriptional activation of selected genes and DNA repair in response to DNA damage. Involved in the Ce-Tor signaling pathway whereby it is required for the accumulation and localization of box C/D snoRNP to nucleoli to regulate ribosomal maturation and thus protein synthesis. Antagonizes the transcriptional activity of transcription factor pha-4, to control postembryonic development and adult longevity. Has a role in pharyngeal development. Has a role in gonadal development. This is RuvB-like 1 from Caenorhabditis elegans.